Consider the following 658-residue polypeptide: CXXC-type zinc finger protein 1 (658 aa).

M1 is subject to N-acetylmethionine. The span at 1–14 (MEGDASDPEPPDAG) shows a compositional bias: acidic residues. The segment at 1–20 (MEGDASDPEPPDAGEDSKSE) is disordered. Residues S6 and S19 each carry the phosphoserine modification. A PHD-type zinc finger spans residues 28-76 (YCICRKPDINCFMIGCDNCNEWFHGDCIRITEKMAKAIREWYCRECREK). The disordered stretch occupies residues 84–164 (YRHKKSRERD…HQQQQQQQQI (81 aa)). Positions 90–120 (RERDSSERDGSEPRDEGGGRKRPAPDPDLQR) are enriched in basic and acidic residues. The span at 153-163 (QHHQQQQQQQQ) shows a compositional bias: low complexity. Residues 162–211 (QQIKRSARMCGECEACRRTEDCGHCDFCRDMKKFGGPNKIRQKCRLRQCQ) form a CXXC-type zinc finger. The Zn(2+) site is built by C171, C174, C177, C183, C186, C189, C205, and C210. Disordered regions lie at residues 221–285 (FPSS…SDED) and 327–373 (VKVK…DPAS). Phosphoserine is present on S226. Phosphothreonine is present on T229. K252 is covalently cross-linked (Glycyl lysine isopeptide (Lys-Gly) (interchain with G-Cter in SUMO2)). Over residues 327–336 (VKVKHVKRRE) the composition is skewed to basic residues. The span at 337–347 (KKSEKKKDERY) shows a compositional bias: basic and acidic residues. Positions 348 to 360 (KRHRQKQKHKDKW) are enriched in basic residues. Over residues 361-370 (KHPERADAKD) the composition is skewed to basic and acidic residues. A coiled-coil region spans residues 428–470 (GKKLLERIRREQQSARTRLQEMERRFHELEAIILRAKQQAVRE).

Component of the SET1 complex, at least composed of the catalytic subunit (SETD1A or SETD1B), WDR5, WDR82, RBBP5, ASH2L/ASH2, CXXC1/CFP1, HCFC1 and DPY30. Interacts with SETD1A. Interacts with ZNF335. Interacts with PRDM9; this interaction does not link PRDM9-activated recombination hotspot sites with DSB machinery and is not required for the hotspot recognition pathway. Interacts with histone H3K4me3. In terms of processing, may be regulated by proteolysis.

It localises to the nucleus speckle. The protein resides in the nucleus. Its function is as follows. Transcriptional activator that exhibits a unique DNA binding specificity for CpG unmethylated motifs with a preference for CpGG. This Bos taurus (Bovine) protein is CXXC-type zinc finger protein 1 (CXXC1).